Consider the following 275-residue polypeptide: Large ribosomal subunit protein uL2 (275 aa).

A disordered region spans residues 221 to 275 (RGSAMTPRDHPHGGGEGKAPRGMPPKTPWGKPALGKRTRRNKKSDRFIIRRRYEA). Over residues 227-239 (PRDHPHGGGEGKA) the composition is skewed to basic and acidic residues. Residues 254–263 (LGKRTRRNKK) show a composition bias toward basic residues. Basic and acidic residues predominate over residues 264–275 (SDRFIIRRRYEA).

It belongs to the universal ribosomal protein uL2 family. In terms of assembly, part of the 50S ribosomal subunit. Forms a bridge to the 30S subunit in the 70S ribosome.

Its function is as follows. One of the primary rRNA binding proteins. Required for association of the 30S and 50S subunits to form the 70S ribosome, for tRNA binding and peptide bond formation. It has been suggested to have peptidyltransferase activity; this is somewhat controversial. Makes several contacts with the 16S rRNA in the 70S ribosome. This is Large ribosomal subunit protein uL2 from Thermomicrobium roseum (strain ATCC 27502 / DSM 5159 / P-2).